The chain runs to 247 residues: Triosephosphate isomerase (247 aa).

8–10 (NWK) contributes to the substrate binding site. Residue His-94 is the Electrophile of the active site. Residue Glu-165 is the Proton acceptor of the active site. Substrate is bound by residues Gly-171 and Ser-210.

The protein belongs to the triosephosphate isomerase family. As to quaternary structure, homodimer.

The protein resides in the cytoplasm. It catalyses the reaction D-glyceraldehyde 3-phosphate = dihydroxyacetone phosphate. It functions in the pathway carbohydrate biosynthesis; gluconeogenesis. Its pathway is carbohydrate degradation; glycolysis; D-glyceraldehyde 3-phosphate from glycerone phosphate: step 1/1. Involved in the gluconeogenesis. Catalyzes stereospecifically the conversion of dihydroxyacetone phosphate (DHAP) to D-glyceraldehyde-3-phosphate (G3P). This chain is Triosephosphate isomerase, found in Aquifex aeolicus (strain VF5).